The chain runs to 76 residues: uORF2 protein (76 aa).

Functionally, plays a role in viral replication. The polypeptide is uORF2 protein (Zika virus (isolate ZIKV/Human/French Polynesia/10087PF/2013) (ZIKV)).